The primary structure comprises 366 residues: tRNA-specific 2-thiouridylase MnmA (366 aa).

ATP-binding positions include 6 to 13 and Leu32; that span reads AMSGGVDS. The Nucleophile role is filled by Cys101. Cys101 and Cys199 are disulfide-bonded. Gly125 provides a ligand contact to ATP. The segment at 149 to 151 is interaction with tRNA; it reads KDQ. Residue Cys199 is the Cysteine persulfide intermediate of the active site.

The protein belongs to the MnmA/TRMU family.

Its subcellular location is the cytoplasm. The catalysed reaction is S-sulfanyl-L-cysteinyl-[protein] + uridine(34) in tRNA + AH2 + ATP = 2-thiouridine(34) in tRNA + L-cysteinyl-[protein] + A + AMP + diphosphate + H(+). Its function is as follows. Catalyzes the 2-thiolation of uridine at the wobble position (U34) of tRNA, leading to the formation of s(2)U34. The protein is tRNA-specific 2-thiouridylase MnmA of Corynebacterium diphtheriae (strain ATCC 700971 / NCTC 13129 / Biotype gravis).